Reading from the N-terminus, the 127-residue chain is Small ribosomal subunit protein uS11 (127 aa).

It belongs to the universal ribosomal protein uS11 family. Part of the 30S ribosomal subunit. Interacts with proteins S7 and S18. Binds to IF-3.

Functionally, located on the platform of the 30S subunit, it bridges several disparate RNA helices of the 16S rRNA. Forms part of the Shine-Dalgarno cleft in the 70S ribosome. This Chlorobium phaeobacteroides (strain BS1) protein is Small ribosomal subunit protein uS11.